The primary structure comprises 583 residues: Sensor protein SrrB (583 aa).

At 1 to 11 (MMSRLNSVVIK) the chain is on the cytoplasmic side. Residues 12 to 32 (LWLTIILIVTTVLILLSIALI) traverse the membrane as a helical segment. The Extracellular segment spans residues 33-174 (TFMQYYFTQE…SIEDTNNAIT (142 aa)). Residues 175 to 195 (IITIITAVIFLTITTVFAFFL) traverse the membrane as a helical segment. Residues 196–583 (SSRITKPLRR…TFIIKLPKPE (388 aa)) are Cytoplasmic-facing. One can recognise an HAMP domain in the interval 197-249 (SRITKPLRRLRDQATRVSEGDYSYKPSVTTKDEIGQLSQAFNQMSTEIEEHVD). Positions 366-583 (NVSHELRTPI…TFIIKLPKPE (218 aa)) constitute a Histidine kinase domain. Position 369 is a phosphohistidine; by autocatalysis (H369).

The protein localises to the cell membrane. The catalysed reaction is ATP + protein L-histidine = ADP + protein N-phospho-L-histidine.. Member of the two-component regulatory system SrrA/SrrB, which is involved in the global regulation of staphylococcal virulence factors in response to environmental oxygen levels as well as biofilm formation. Also plays an essential role in host-derived nitric oxide resistance by regulating hmp/flavohemoglobin, an enzyme that detoxifies nitric oxide by converting it to nitrate. Functions as a sensor protein kinase which is autophosphorylated at a histidine residue and transfers its phosphate group to SrrA. In turn, SrrA binds to the upstream promoter regions of the target genes to positively and negatively regulate their expression. This Staphylococcus aureus (strain MW2) protein is Sensor protein SrrB (srrB).